The sequence spans 1068 residues: Huntingtin-interacting protein 1-related protein (1068 aa).

Residue methionine 1 is modified to N-acetylmethionine. Residues 23–151 (EREQFDKTQA…SFHLKHPQFP (129 aa)) form the ENTH domain. Residues 346–644 (GSMKDDRDLQ…LQDAVSKLDD (299 aa)) are a coiled coil. The tract at residues 582–610 (EALSQEQQRSSQEKGELRGQLAEKESQEQ) is disordered. Basic and acidic residues predominate over residues 592–608 (SQEKGELRGQLAEKESQ). The I/LWEQ domain maps to 771-1012 (SLDVRQEELG…ELRKQHYVLA (242 aa)). The segment at 867–924 (RWTEGLISASKAVGWGATQLVESADKVVLHMGKYEELIVCSHEIAASTAQLVAASKVK) is important for actin binding. Residues 1011–1068 (LAGGMGTPSEEEPSRPSPAPRSGATKKPPLAQKPSIAPRTDNQLDKKDGVYPAQLVNY) are disordered.

The protein belongs to the SLA2 family. As to quaternary structure, homodimer. Interacts with actin; homodimerization promotes actin binding. Interacts with CLTB. Interacts with HIP1. Interacts (via ENTH and I/LWEQ domains) with BCL2L10. As to expression, widely expressed. Expressed at lower levels in skeletal muscle and heart. The level of expression does not change appreciably during development.

It localises to the cytoplasm. The protein localises to the perinuclear region. Its subcellular location is the endomembrane system. The protein resides in the cytoplasmic vesicle. It is found in the clathrin-coated vesicle membrane. Component of clathrin-coated pits and vesicles, that may link the endocytic machinery to the actin cytoskeleton. Binds 3-phosphoinositides (via ENTH domain). May act through the ENTH domain to promote cell survival by stabilizing receptor tyrosine kinases following ligand-induced endocytosis. This chain is Huntingtin-interacting protein 1-related protein (Hip1r), found in Mus musculus (Mouse).